A 507-amino-acid chain; its full sequence is uncharacterized protein (507 aa).

The next 14 helical transmembrane spans lie at 8–28 (VKGVSWHLLSYFLAAPIAYLV), 41–61 (VGLFYAVLDFFSMLVVFRAFG), 86–106 (IVFVGILQTILAFIVAFLVVI), 130–150 (INILIIMAMGYYFLDSIVAFF), 171–191 (ILSVFIFSLIFIYLFNVHNAY), 193–213 (PSVSYLLMAVVMIIIYGYIVV), 235–255 (LFSYGMYVMIGYAGSLILGYL), 275–295 (VAMPTVNILSYFAFSVGAVLF), 323–343 (IIVTPLAILMAYFPTVIINIL), 355–375 (IQILSFGAMFLTFNSIGFNIL), 387–407 (ILYIGASFNLIFNILLIPKFG), 408–428 (IIGAAITTVFGYFIMWIFQIW), 444–464 (ILVILVGIFSLIPVMFIKDLI), and 467–487 (VILQLFVCGVVYFGIYILGIF).

This sequence belongs to the polysaccharide synthase family.

It is found in the cell membrane. This is an uncharacterized protein from Methanocaldococcus jannaschii (strain ATCC 43067 / DSM 2661 / JAL-1 / JCM 10045 / NBRC 100440) (Methanococcus jannaschii).